Consider the following 269-residue polypeptide: Phosphonoacetaldehyde hydrolase (269 aa).

Catalysis depends on D10, which acts as the Nucleophile. Positions 10 and 12 each coordinate Mg(2+). The active-site Schiff-base intermediate with substrate is the K52. D186 contributes to the Mg(2+) binding site.

This sequence belongs to the HAD-like hydrolase superfamily. PhnX family. In terms of assembly, homodimer. Requires Mg(2+) as cofactor.

It catalyses the reaction phosphonoacetaldehyde + H2O = acetaldehyde + phosphate + H(+). Functionally, involved in phosphonate degradation. This is Phosphonoacetaldehyde hydrolase from Salmonella paratyphi A (strain ATCC 9150 / SARB42).